The following is a 261-amino-acid chain: Phosphoribosylaminoimidazole-succinocarboxamide synthase (261 aa).

It belongs to the SAICAR synthetase family.

The enzyme catalyses 5-amino-1-(5-phospho-D-ribosyl)imidazole-4-carboxylate + L-aspartate + ATP = (2S)-2-[5-amino-1-(5-phospho-beta-D-ribosyl)imidazole-4-carboxamido]succinate + ADP + phosphate + 2 H(+). The protein operates within purine metabolism; IMP biosynthesis via de novo pathway; 5-amino-1-(5-phospho-D-ribosyl)imidazole-4-carboxamide from 5-amino-1-(5-phospho-D-ribosyl)imidazole-4-carboxylate: step 1/2. This is Phosphoribosylaminoimidazole-succinocarboxamide synthase from Novosphingobium aromaticivorans (strain ATCC 700278 / DSM 12444 / CCUG 56034 / CIP 105152 / NBRC 16084 / F199).